Reading from the N-terminus, the 476-residue chain is Tubulointerstitial nephritis antigen (476 aa).

N-linked (GlcNAc...) asparagine glycosylation is present at Asn38. An SMB domain is found at 59–107 (NFGCCEDRDDGCVTEFYAANALCYCDKFCDRENSDCCPDYKSFCREEKE). Disulfide bonds link Cys63–Cys70, Cys70–Cys102, Cys81–Cys83, Cys81–Cys95, Cys87–Cys94, and Cys95–Cys102. N-linked (GlcNAc...) asparagine glycans are attached at residues Asn175, Asn314, Asn360, and Asn455.

This sequence belongs to the peptidase C1 family. It has been suggested that the active SMB domain may be permitted considerable disulfide bond heterogeneity or variability, thus 2 alternate disulfide patterns based on 3D structures are described with 1 disulfide bond conserved in both. In terms of tissue distribution, expressed in the kidney cortex, small intestine and cornea.

It is found in the secreted. It localises to the extracellular space. Its subcellular location is the extracellular matrix. The protein resides in the basement membrane. Its function is as follows. Mediates adhesion of proximal tubule epithelial cells via integrins alpha3-beta1 and alphaV-beta3. This is a non catalytic peptidase C1 family protein. The polypeptide is Tubulointerstitial nephritis antigen (TINAG) (Homo sapiens (Human)).